The primary structure comprises 100 residues: Urease subunit gamma (100 aa).

Belongs to the urease gamma subunit family. As to quaternary structure, heterotrimer of UreA (gamma), UreB (beta) and UreC (alpha) subunits. Three heterotrimers associate to form the active enzyme.

Its subcellular location is the cytoplasm. It carries out the reaction urea + 2 H2O + H(+) = hydrogencarbonate + 2 NH4(+). The protein operates within nitrogen metabolism; urea degradation; CO(2) and NH(3) from urea (urease route): step 1/1. The sequence is that of Urease subunit gamma from Mycobacterium sp. (strain JLS).